The sequence spans 325 residues: Myo-inositol dehydrogenase Hyg17 (325 aa).

Belongs to the Gfo/Idh/MocA family.

It catalyses the reaction myo-inositol + NAD(+) = myo-inosose-5 + NADH + H(+). It participates in antibiotic biosynthesis. Its function is as follows. Dehydrogenase involved in the biosynthesis of the aminocyclitol moiety of hygromycin A, a broad-spectrum antibiotic. Catalyzes the NAD(+)-dependent oxidation of myo-inositol to myo-inosose-5 (neo-inosose). Shows reduced activity with scyllo-inositol, minimal activity with L-chiro-inositol and no activity with D-glucose, D-chiro-inositol, epi-inositol, muco-inositol and allo-inositol. Is specific for NAD(+) and cannot use NADP(+). The polypeptide is Myo-inositol dehydrogenase Hyg17 (Streptomyces leeuwenhoekii).